Here is a 178-residue protein sequence, read N- to C-terminus: Large ribosomal subunit protein uL6 (178 aa).

This sequence belongs to the universal ribosomal protein uL6 family. As to quaternary structure, part of the 50S ribosomal subunit.

Functionally, this protein binds to the 23S rRNA, and is important in its secondary structure. It is located near the subunit interface in the base of the L7/L12 stalk, and near the tRNA binding site of the peptidyltransferase center. The sequence is that of Large ribosomal subunit protein uL6 from Enterococcus faecalis (strain ATCC 700802 / V583).